Reading from the N-terminus, the 547-residue chain is MKNIKVITGVIATLGIFSALLLVTGILFYSAVSSDRLNFQNASALSYQQQELGGSFQTLIETRVTINRVAIRMLKNQRDPASLDAMNTLLTNAGASLNEAEKHFNNYVNSEAIAGKDPALDAQAEASFKQMYDVLQQSIHYLKADNYAAYGNLDAQKAQDDMEQVYDQWLSQNAQLIKLASDQNQSSFTQMQWTLGIILLIVLIVLAFIWLGLQRVLLRPLQRIMAHIQTIADGDLTHEIEAEGRSEMGQLAAGLKTMQQSLIRTVSAVRDNADSIYTGAGEISAGSSDLSSRTEQQASALEETAASMEQLTATVRQNTDNARQATGLAKTASETARKGGRVVDNVVSTMNDIAESSEKIVDITSVIDGIAFQTNILALNAAVEAARAGEQGRGFAVVAGEVRTLASRSAQAAKEIKVLIENSVSRIDTGSTQVREAGETMKEIVNAVTRVTDIMGEIASASDEQSKGIEQVAQAVSEMDSVTQQNASLVEESAAAAAALEDQANELRQAVAAFRIQKQPRREASPTTLSKGLTPQPAAEQANWESF.

The Cytoplasmic segment spans residues 1-5 (MKNIK). A helical transmembrane segment spans residues 6–29 (VITGVIATLGIFSALLLVTGILFY). Over 30 to 189 (SAVSSDRLNF…ASDQNQSSFT (160 aa)) the chain is Periplasmic. Residues 190–213 (QMQWTLGIILLIVLIVLAFIWLGL) traverse the membrane as a helical segment. The Cytoplasmic portion of the chain corresponds to 214–547 (QRVLLRPLQR…AAEQANWESF (334 aa)). One can recognise an HAMP domain in the interval 215–267 (RVLLRPLQRIMAHIQTIADGDLTHEIEAEGRSEMGQLAAGLKTMQQSLIRTVS). A Methyl-accepting transducer domain is found at 272–501 (NADSIYTGAG…ESAAAAAALE (230 aa)). Gln296 bears the Glutamate methyl ester (Gln) mark. Position 303 is a glutamate methyl ester (Glu) (Glu303). Residue Gln310 is modified to Glutamate methyl ester (Gln). The tract at residues 317-336 (QNTDNARQATGLAKTASETA) is disordered. Glutamate methyl ester (Glu) is present on residues Glu492 and Glu501. Residues 518–547 (KQPRREASPTTLSKGLTPQPAAEQANWESF) form a disordered region.

The protein belongs to the methyl-accepting chemotaxis (MCP) protein family. Methylation level is increased by citrate and decreased by phenol.

The protein localises to the cell inner membrane. In terms of biological role, acts as a receptor for citrate and mediates taxis away from phenol. Also mediates an attractant response to metal-citrate complexes. This chain is Methyl-accepting chemotaxis citrate transducer (tcp), found in Salmonella typhimurium (strain LT2 / SGSC1412 / ATCC 700720).